The following is a 145-amino-acid chain: Large-conductance mechanosensitive channel (145 aa).

Helical transmembrane passes span 10–30 (FALK…GAFA), 41–61 (IMPI…MFLI), and 87–107 (GNFI…FMMV).

Belongs to the MscL family. As to quaternary structure, homopentamer.

The protein resides in the cell inner membrane. Functionally, channel that opens in response to stretch forces in the membrane lipid bilayer. May participate in the regulation of osmotic pressure changes within the cell. In Psychrobacter arcticus (strain DSM 17307 / VKM B-2377 / 273-4), this protein is Large-conductance mechanosensitive channel.